Consider the following 251-residue polypeptide: NADPH-dependent oxidoreductase (251 aa).

This sequence belongs to the flavin oxidoreductase frp family. FMN is required as a cofactor.

In terms of biological role, reduces FMN, organic nitro compounds and disulfide DTNB. Involved in maintenance of the cellular redox state and the disulfide stress response. The sequence is that of NADPH-dependent oxidoreductase (nfrA) from Staphylococcus epidermidis (strain ATCC 12228 / FDA PCI 1200).